Consider the following 246-residue polypeptide: Nodulin-25 (246 aa).

The N-terminal stretch at 1–24 (MVYSNTYMLLGLGVFVLLSSHVLA) is a signal peptide.

The protein resides in the symbiosome. It is found in the peribacteroid space. Involved in the development and function of nodules. It might participate in the biological process of symbiotic nitrogen fixation. In Medicago sativa (Alfalfa), this protein is Nodulin-25 (NMS-25).